The primary structure comprises 309 residues: uncharacterized protein (309 aa).

The RPE1 insert domain maps to 9–55; it reads NFLYNIANKDGFKGYKECRTSAYKNVFDDSSTKSTSKFHLGISDTKN. The helical transmembrane segment at 62-82 threads the bilayer; the sequence is IIGLILIIFAGVLFYAYILQH.

It belongs to the LicD transferase family.

It is found in the membrane. This is an uncharacterized protein from Rickettsia typhi (strain ATCC VR-144 / Wilmington).